The primary structure comprises 344 residues: Transcription factor HHO3 (344 aa).

Disordered stretches follow at residues 90–122 (KWSS…DKKK) and 156–212 (AFQP…KQRR). Residues 97–106 (DETDKDEEAE) are compositionally biased toward acidic residues. The span at 178-188 (TPTSTTTTSST) shows a compositional bias: low complexity. The HTH myb-type domain occupies 206 to 266 (SNRKQRRCWS…HLQKYRLHTR (61 aa)). The H-T-H motif DNA-binding region spans 237–262 (PKQIRDLMKVDGLTNDEVKSHLQKYR). Residues 306–344 (PVATQPPQSSTSGERSNRGCKSPATSSTTTHTPHLLPLS) form a disordered region. Polar residues predominate over residues 310 to 319 (QPPQSSTSGE). The span at 330–344 (TSSTTTHTPHLLPLS) shows a compositional bias: low complexity.

It localises to the nucleus. Functionally, probable transcription factor involved in phosphate signaling in roots. This Arabidopsis thaliana (Mouse-ear cress) protein is Transcription factor HHO3.